Consider the following 351-residue polypeptide: Fe(3+) ions import ATP-binding protein FbpC (351 aa).

The ABC transporter domain occupies 9–239 (LVLKNINKTF…PNSLFLANFM (231 aa)). Residue 41 to 48 (GPSGCGKT) coordinates ATP.

The protein belongs to the ABC transporter superfamily. Fe(3+) ion importer (TC 3.A.1.10) family. In terms of assembly, the complex is composed of two ATP-binding proteins (FbpC), two transmembrane proteins (FbpB) and a solute-binding protein (FbpA).

The protein resides in the cell inner membrane. The enzyme catalyses Fe(3+)(out) + ATP + H2O = Fe(3+)(in) + ADP + phosphate + H(+). Its function is as follows. Part of the ABC transporter complex FbpABC involved in Fe(3+) ions import. Responsible for energy coupling to the transport system. The protein is Fe(3+) ions import ATP-binding protein FbpC of Mannheimia succiniciproducens (strain KCTC 0769BP / MBEL55E).